A 558-amino-acid chain; its full sequence is Type I restriction enzyme MjaIX methylase subunit (558 aa).

Residues 1–37 (MATLDKFLSIKENDEKTKKKESKKKSSKSNKTSESLV) form a disordered region. Over residues 8 to 18 (LSIKENDEKTK) the composition is skewed to basic and acidic residues. A compositionally biased stretch (basic residues) spans 19–28 (KKESKKKSSK). Residues 227–232 (KFYTPR), 256–258 (SGG), and Asp283 contribute to the S-adenosyl-L-methionine site.

The protein belongs to the N(4)/N(6)-methyltransferase family. In terms of assembly, the type I restriction/modification system is composed of three polypeptides R, M and S.

It carries out the reaction a 2'-deoxyadenosine in DNA + S-adenosyl-L-methionine = an N(6)-methyl-2'-deoxyadenosine in DNA + S-adenosyl-L-homocysteine + H(+). Functionally, the subtype gamma methyltransferase (M) subunit of a type I restriction enzyme. The M and S subunits together form a methyltransferase (MTase) that methylates A-3 on the top and A-2 on the bottom strand of the sequence 5'-CCAN(5)GTR-3'. In the presence of the R subunit the complex can also act as an endonuclease, binding to the same target sequence but cutting the DNA some distance from this site. Whether the DNA is cut or modified depends on the methylation state of the target sequence. When the target site is unmodified, the DNA is cut. When the target site is hemimethylated, the complex acts as a maintenance MTase modifying the DNA so that both strands become methylated. After locating a non-methylated recognition site, the enzyme complex serves as a molecular motor that translocates DNA in an ATP-dependent manner until a collision occurs that triggers cleavage. The polypeptide is Type I restriction enzyme MjaIX methylase subunit (Methanocaldococcus jannaschii (strain ATCC 43067 / DSM 2661 / JAL-1 / JCM 10045 / NBRC 100440) (Methanococcus jannaschii)).